Here is a 505-residue protein sequence, read N- to C-terminus: Tyrosine-protein kinase isoform SRK1 (505 aa).

Polar residues-rich tracts occupy residues 1–10 and 18–31; these read MGSCCSSQDG and AGST…SQSV. The tract at residues 1–53 is disordered; sequence MGSCCSSQDGDGNGKATAGSTVDSHELSQSVKGKIKQPEPKPKPPPQVPPAQD. The region spanning 54–116 is the SH3 domain; that stretch reads VKYPIYVGKY…PSNYVAEYKS (63 aa). Residues 122–214 form the SH2 domain; it reads WFLGKIKRVE…GLCCKLLYPC (93 aa). The 254-residue stretch at 240-493 folds into the Protein kinase domain; that stretch reads IKLLRRLGAG…TLQWQLEEFF (254 aa). Residues 246–254 and Lys-268 each bind ATP; that span reads LGAGQFGEV. The Proton acceptor role is filled by Asp-359.

The protein belongs to the protein kinase superfamily. Tyr protein kinase family. SRC subfamily.

The protein resides in the cytoplasm. The enzyme catalyses L-tyrosyl-[protein] + ATP = O-phospho-L-tyrosyl-[protein] + ADP + H(+). This Spongilla lacustris (Freshwater sponge) protein is Tyrosine-protein kinase isoform SRK1 (SRK1).